Here is a 319-residue protein sequence, read N- to C-terminus: Acetyl-coenzyme A carboxylase carboxyl transferase subunit alpha (319 aa).

One can recognise a CoA carboxyltransferase C-terminal domain in the interval 43–296 (LRDKSIELTR…KKQLLFDLSE (254 aa)).

Belongs to the AccA family. Acetyl-CoA carboxylase is a heterohexamer composed of biotin carboxyl carrier protein (AccB), biotin carboxylase (AccC) and two subunits each of ACCase subunit alpha (AccA) and ACCase subunit beta (AccD).

Its subcellular location is the cytoplasm. The catalysed reaction is N(6)-carboxybiotinyl-L-lysyl-[protein] + acetyl-CoA = N(6)-biotinyl-L-lysyl-[protein] + malonyl-CoA. Its pathway is lipid metabolism; malonyl-CoA biosynthesis; malonyl-CoA from acetyl-CoA: step 1/1. Its function is as follows. Component of the acetyl coenzyme A carboxylase (ACC) complex. First, biotin carboxylase catalyzes the carboxylation of biotin on its carrier protein (BCCP) and then the CO(2) group is transferred by the carboxyltransferase to acetyl-CoA to form malonyl-CoA. In Baumannia cicadellinicola subsp. Homalodisca coagulata, this protein is Acetyl-coenzyme A carboxylase carboxyl transferase subunit alpha.